Consider the following 62-residue polypeptide: Large ribosomal subunit protein bL32m (62 aa).

This sequence belongs to the bacterial ribosomal protein bL32 family.

Its subcellular location is the mitochondrion. The protein is Large ribosomal subunit protein bL32m (RPL32) of Reclinomonas americana.